Here is a 174-residue protein sequence, read N- to C-terminus: MKIGPVGKHDARSTTIVNWDEGSHDGFIYQIFLSHGVAGIMSIQFQFVMDGKLVLSDRHGPCSGDMFDVIELNYPHEYITGISGEYYKYEANIPHMRSLKFNTNTSEYGPFGTSGSSNDKFAFKLGKSPQFGGFHGTYDASGLQYIGVYLRPKTVLPKIDTGNAEETESKIVLG.

Positions 1–152 (MKIGPVGKHD…LQYIGVYLRP (152 aa)) constitute a Jacalin-type lectin domain.

The protein belongs to the jacalin lectin family. Self-interacts. Interacts with RTM3.

The protein resides in the cytoplasm. In terms of biological role, unable to mediate restriction of long-distance movement of the pathogenic tobacco etch virus (TEV) without causing a hypersensitive response or inducing systemic acquired resistance. The polypeptide is Inactive protein RESTRICTED TEV MOVEMENT 1 (RTM1) (Arabidopsis thaliana (Mouse-ear cress)).